The chain runs to 252 residues: Endonuclease NucS (252 aa).

It belongs to the NucS endonuclease family.

It localises to the cytoplasm. Cleaves both 3' and 5' ssDNA extremities of branched DNA structures. In Sulfurisphaera tokodaii (strain DSM 16993 / JCM 10545 / NBRC 100140 / 7) (Sulfolobus tokodaii), this protein is Endonuclease NucS.